A 206-amino-acid chain; its full sequence is CBS domain-containing protein CBSX3, mitochondrial (206 aa).

Residues 1-39 constitute a mitochondrion transit peptide; that stretch reads MQGVIRSFVSGGNVVKGSVLQHLRVINPAIQPSVFCSRS. CBS domains are found at residues 61–127 and 136–194; these read MKSK…GRSS and MTEE…HREE.

The protein resides in the mitochondrion. This chain is CBS domain-containing protein CBSX3, mitochondrial (CBSX3), found in Arabidopsis thaliana (Mouse-ear cress).